Reading from the N-terminus, the 314-residue chain is CBASS oligonucleotide cyclase CdnC (314 aa).

Lysine 60 is an ATP binding site. 2 residues coordinate Mg(2+): aspartate 73 and aspartate 75. ATP contacts are provided by residues aspartate 75, lysine 186, 197 to 199 (KSF), and asparagine 263.

It belongs to the CD-NTase family. C01 subfamily. In terms of assembly, forms complexes with Cap7 with 1:1 and 2:2 stoichimetry, and a 1:1:6 CdnC:Cap7:Cap6 complex. The cofactor is Mg(2+).

In terms of biological role, cyclic nucleotide synthase (second messenger synthase) of a CBASS antivirus system. CBASS (cyclic oligonucleotide-based antiphage signaling system) provides immunity against bacteriophage. The CD-NTase protein synthesizes cyclic nucleotides in response to infection; these serve as specific second messenger signals. The signals activate a diverse range of effectors, leading to bacterial cell death and thus abortive phage infection. A type III CBASS system. Expression of this CBASS system (Cap18-Cap6-Cap7-CdnC-CapW-Cap17) in a susceptible E.coli (strain MG1655) confers resistance to bacteriophage P1. Probable cyclic nucleotide synthase that upon activation catalyzes the synthesis of a cyclic nucleotide. A cyclase activity for this enzyme was not identified in. The sequence is that of CBASS oligonucleotide cyclase CdnC from Escherichia coli (strain KTE188).